The primary structure comprises 523 residues: Solute carrier family 2, facilitated glucose transporter member 2 (523 aa).

Topologically, residues 1–10 (MSEDKITGTL) are cytoplasmic. A helical membrane pass occupies residues 11–31 (AFTVFTAVLSSFQFGYDIGVI). Over 32–97 (NAPQEVIISH…SAHIVTMLWS (66 aa)) the chain is Extracellular. Residue Asn62 is glycosylated (N-linked (GlcNAc...) asparagine). Residues 98–118 (LSVSSFAVGGMVASFFGGWLG) traverse the membrane as a helical segment. At 119-126 (DKLGRIKA) the chain is on the cytoplasmic side. The helical transmembrane segment at 127–147 (MLAANSLSLTGALLMGCSKFG) threads the bilayer. The Extracellular segment spans residues 148 to 157 (PAHALIIAGR). A helical membrane pass occupies residues 158–178 (SVSGLYCGLISGLVPMYIGEI). The Cytoplasmic portion of the chain corresponds to 179–186 (APTTLRGA). The helical transmembrane segment at 187–207 (LGTLHQLALVTGILISQIAGL) threads the bilayer. Gln192 serves as a coordination point for D-glucose. Topologically, residues 208–216 (SFILGNQDH) are extracellular. Residues 217–237 (WHILLGLSAVPALLQCLLLLF) traverse the membrane as a helical segment. At 238–302 (CPESPRYLYI…LFTDANYRQP (65 aa)) the chain is on the cytoplasmic side. Residues 303 to 323 (ILVALMLHMAQQFSGINGIFY) form a helical membrane-spanning segment. D-glucose contacts are provided by residues 313 to 314 (QQ) and Asn319. Residues 324–337 (YSTSIFQTAGISQP) lie on the Extracellular side of the membrane. The chain crosses the membrane as a helical span at residues 338 to 358 (VYATIGVGAINMIFTAVSVLL). Residue Asn348 coordinates D-glucose. The Cytoplasmic portion of the chain corresponds to 359–367 (VEKAGRRTL). The chain crosses the membrane as a helical span at residues 368-388 (FLTGMIGMFFCTIFMSVGLVL). Residues 389-401 (LDKFAWMSYVSMT) lie on the Extracellular side of the membrane. Residues 402–422 (AIFLFVSFFEIGPGPIPWFMV) form a helical membrane-spanning segment. Positions 411 and 419 each coordinate D-glucose. At 423–432 (AEFFSQGPRP) the chain is on the cytoplasmic side. A helical transmembrane segment spans residues 433-453 (TALALAAFSNWVCNFVIALCF). At 454–460 (QYIADFL) the chain is on the extracellular side. Residues 461 to 481 (GPYVFFLFAGVVLVFTLFTFF) form a helical membrane-spanning segment. Residues 482–523 (KVPETKGKSFEEIAAEFRKKSGSAPPRKAAVQMEFLASSESV) lie on the Cytoplasmic side of the membrane. Ser522 bears the Phosphoserine mark.

Belongs to the major facilitator superfamily. Sugar transporter (TC 2.A.1.1) family. Glucose transporter subfamily. In terms of processing, N-glycosylated; required for stability and retention at the cell surface of pancreatic beta cells. As to expression, in embryo, expressed in endoderm layer of yolk sac and liver primordium.

Its subcellular location is the cell membrane. It catalyses the reaction D-glucose(out) = D-glucose(in). The enzyme catalyses D-fructose(out) = D-fructose(in). It carries out the reaction L-dehydroascorbate(out) = L-dehydroascorbate(in). The catalysed reaction is D-galactose(in) = D-galactose(out). With respect to regulation, D-glucose and maltose competitively inhibit fructose transport. D-glucose, D-fructose and maltose inhibit deoxyglucose transport. Functionally, facilitative hexose transporter that mediates the transport of glucose, fructose and galactose. Likely mediates the bidirectional transfer of glucose across the plasma membrane of hepatocytes and is responsible for uptake of glucose by the beta cells; may comprise part of the glucose-sensing mechanism of the beta cell. May also participate with the Na(+)/glucose cotransporter in the transcellular transport of glucose in the small intestine and kidney. Also able to mediate the transport of dehydroascorbate. The sequence is that of Solute carrier family 2, facilitated glucose transporter member 2 from Mus musculus (Mouse).